A 251-amino-acid chain; its full sequence is Adenosylcobinamide-GDP ribazoletransferase (251 aa).

A run of 7 helical transmembrane segments spans residues 36-56 (LYPFIGLIIGALWYLSFFVLS), 60-80 (VPIMLMAALILTVPYILTGFL), 110-130 (VGAFSVISVVLLLLVEFAGMF), 141-161 (VLIFIPIASRAINGYFIVSQE), 181-201 (EIILLGIYVLVALITFFTLGI), 202-222 (NYLIAILAMGLISFILLLKVK), and 231-251 (DVAGYILVLMEFTGILLLGII).

Belongs to the CobS family. Mg(2+) serves as cofactor.

It localises to the cell membrane. The catalysed reaction is alpha-ribazole + adenosylcob(III)inamide-GDP = adenosylcob(III)alamin + GMP + H(+). It catalyses the reaction alpha-ribazole 5'-phosphate + adenosylcob(III)inamide-GDP = adenosylcob(III)alamin 5'-phosphate + GMP + H(+). Its pathway is cofactor biosynthesis; adenosylcobalamin biosynthesis; adenosylcobalamin from cob(II)yrinate a,c-diamide: step 7/7. Its function is as follows. Joins adenosylcobinamide-GDP and alpha-ribazole to generate adenosylcobalamin (Ado-cobalamin). Also synthesizes adenosylcobalamin 5'-phosphate from adenosylcobinamide-GDP and alpha-ribazole 5'-phosphate. This Clostridium perfringens (strain 13 / Type A) protein is Adenosylcobinamide-GDP ribazoletransferase.